Here is a 440-residue protein sequence, read N- to C-terminus: Thymidine phosphorylase (440 aa).

This sequence belongs to the thymidine/pyrimidine-nucleoside phosphorylase family. As to quaternary structure, homodimer.

The catalysed reaction is thymidine + phosphate = 2-deoxy-alpha-D-ribose 1-phosphate + thymine. It functions in the pathway pyrimidine metabolism; dTMP biosynthesis via salvage pathway; dTMP from thymine: step 1/2. Functionally, the enzymes which catalyze the reversible phosphorolysis of pyrimidine nucleosides are involved in the degradation of these compounds and in their utilization as carbon and energy sources, or in the rescue of pyrimidine bases for nucleotide synthesis. This Klebsiella pneumoniae subsp. pneumoniae (strain ATCC 700721 / MGH 78578) protein is Thymidine phosphorylase.